The following is a 701-amino-acid chain: Rab-like protein 6 (701 aa).

Met-1 carries the post-translational modification N-acetylmethionine. Residues Gly-39–Ser-279 are small GTPase-like. GTP-binding positions include Gly-50–Thr-57, Asp-100–Lys-104, and Tyr-177–Asp-179. The interval Ser-279–Leu-701 is disordered. A compositionally biased stretch (low complexity) spans Ser-284 to Ser-315. Pro residues predominate over residues Thr-316–Pro-344. 5 positions are modified to phosphoserine: Ser-394, Ser-416, Ser-418, Ser-461, and Ser-462. Low complexity predominate over residues Ala-495 to Ala-506. Phosphoserine is present on Ser-552. Over residues Asp-555–Leu-569 the composition is skewed to basic and acidic residues. Residue Ser-570 is modified to Phosphoserine. Residue Thr-573 is modified to Phosphothreonine. The segment covering Val-580–Leu-589 has biased composition (pro residues). The span at Glu-608 to Lys-626 shows a compositional bias: basic and acidic residues. Phosphoserine is present on residues Ser-614 and Ser-615. Residues Lys-629–Arg-667 form an interaction with CDKN2A region. Positions Ala-643–Arg-653 are enriched in basic residues. Positions Glu-654–Arg-665 are enriched in basic and acidic residues. The segment covering Leu-683 to Leu-701 has biased composition (gly residues).

The protein belongs to the small GTPase superfamily. Rab family.

It localises to the nucleus. The protein localises to the cytoplasm. In terms of biological role, may enhance cellular proliferation. May reduce growth inhibitory activity of CDKN2A. In Bos taurus (Bovine), this protein is Rab-like protein 6 (RABL6).